Reading from the N-terminus, the 505-residue chain is ATP synthase subunit alpha, chloroplastic (505 aa).

170–177 (GDRQTGKT) lines the ATP pocket.

Belongs to the ATPase alpha/beta chains family. As to quaternary structure, F-type ATPases have 2 components, CF(1) - the catalytic core - and CF(0) - the membrane proton channel. CF(1) has five subunits: alpha(3), beta(3), gamma(1), delta(1), epsilon(1). CF(0) has four main subunits: a, b, b' and c.

It is found in the plastid. The protein localises to the chloroplast thylakoid membrane. The catalysed reaction is ATP + H2O + 4 H(+)(in) = ADP + phosphate + 5 H(+)(out). In terms of biological role, produces ATP from ADP in the presence of a proton gradient across the membrane. The alpha chain is a regulatory subunit. In Zygnema circumcarinatum (Green alga), this protein is ATP synthase subunit alpha, chloroplastic.